We begin with the raw amino-acid sequence, 327 residues long: DNA repair and recombination protein RadA (327 aa).

113-120 (GEFGSGKS) is an ATP binding site.

It belongs to the eukaryotic RecA-like protein family.

In terms of biological role, involved in DNA repair and in homologous recombination. Binds and assemble on single-stranded DNA to form a nucleoprotein filament. Hydrolyzes ATP in a ssDNA-dependent manner and promotes DNA strand exchange between homologous DNA molecules. This chain is DNA repair and recombination protein RadA, found in Ignicoccus hospitalis (strain KIN4/I / DSM 18386 / JCM 14125).